The chain runs to 327 residues: Phenylalanine--tRNA ligase alpha subunit (327 aa).

E252 is a Mg(2+) binding site.

The protein belongs to the class-II aminoacyl-tRNA synthetase family. Phe-tRNA synthetase alpha subunit type 1 subfamily. Tetramer of two alpha and two beta subunits. Requires Mg(2+) as cofactor.

The protein resides in the cytoplasm. It catalyses the reaction tRNA(Phe) + L-phenylalanine + ATP = L-phenylalanyl-tRNA(Phe) + AMP + diphosphate + H(+). The protein is Phenylalanine--tRNA ligase alpha subunit of Salmonella choleraesuis (strain SC-B67).